Reading from the N-terminus, the 239-residue chain is Pre-mRNA-splicing factor isy1 (239 aa).

Belongs to the ISY1 family. Associated with the spliceosome.

The protein resides in the cytoplasm. It localises to the nucleus. Its function is as follows. Involved in pre-mRNA splicing. In Neurospora crassa (strain ATCC 24698 / 74-OR23-1A / CBS 708.71 / DSM 1257 / FGSC 987), this protein is Pre-mRNA-splicing factor isy1 (msp-7).